The chain runs to 699 residues: MAACEGRRSGALGSSQSDFLTPPVGGAPWAVATTVVMYPPPPPPPHRDFISVTLSFGENYDNSKSWRRRSCWRKWKQLSRLQRNMILFLLAFLLFCGLLFYINLADHWKALAFRLEEEQKMRPEIAGLKPANPPVLPAPQKADTDPENLPEISSQKTQRHIQRGPPHLQIRPPSQDLKDGTQEEATKRQEAPVDPRPEGDPQRTVISWRGAVIEPEQGTELPSRRAEVPTKPPLPPARTQGTPVHLNYRQKGVIDVFLHAWKGYRKFAWGHDELKPVSRSFSEWFGLGLTLIDALDTMWILGLRKEFEEARKWVSKKLHFEKDVDVNLFESTIRILGGLLSAYHLSGDSLFLRKAEDFGNRLMPAFRTPSKIPYSDVNIGTGVAHPPRWTSDSTVAEVTSIQLEFRELSRLTGDKKFQEAVEKVTQHIHGLSGKKDGLVPMFINTHSGLFTHLGVFTLGARADSYYEYLLKQWIQGGKQETQLLEDYVEAIEGVRTHLLRHSEPSKLTFVGELAHGRFSAKMDHLVCFLPGTLALGVYHGLPASHMELAQELMETCYQMNRQMETGLSPEIVHFNLYPQPGRRDVEVKPADRHNLLRPETVESLFYLYRVTGDRKYQDWGWEILQSFSRFTRVPSGGYSSINNVQDPQKPEPRDKMESFFLGETLKYLFLLFSDDPNLLSLDAYVFNTEAHPLPIWTPA.

The Cytoplasmic portion of the chain corresponds to 1-84 (MAACEGRRSG…WKQLSRLQRN (84 aa)). Residues 85-105 (MILFLLAFLLFCGLLFYINLA) form a helical; Signal-anchor for type II membrane protein membrane-spanning segment. The Lumenal segment spans residues 106 to 699 (DHWKALAFRL…AHPLPIWTPA (594 aa)). Residues 125–243 (IAGLKPANPP…LPPARTQGTP (119 aa)) are disordered. Residues 176–201 (DLKDGTQEEATKRQEAPVDPRPEGDP) show a composition bias toward basic and acidic residues. The active-site Proton donor is Glu330. The active site involves Asp463. A disulfide bridge connects residues Cys527 and Cys556. Glu570 serves as the catalytic Proton donor. Glu599 is an active-site residue. Thr688 provides a ligand contact to Ca(2+).

This sequence belongs to the glycosyl hydrolase 47 family. Requires Ca(2+) as cofactor. Widely expressed.

It is found in the endoplasmic reticulum membrane. It catalyses the reaction N(4)-(alpha-D-Man-(1-&gt;2)-alpha-D-Man-(1-&gt;2)-alpha-D-Man-(1-&gt;3)-[alpha-D-Man-(1-&gt;2)-alpha-D-Man-(1-&gt;3)-[alpha-D-Man-(1-&gt;2)-alpha-D-Man-(1-&gt;6)]-alpha-D-Man-(1-&gt;6)]-beta-D-Man-(1-&gt;4)-beta-D-GlcNAc-(1-&gt;4)-beta-D-GlcNAc)-L-asparaginyl-[protein] (N-glucan mannose isomer 9A1,2,3B1,2,3) + 4 H2O = N(4)-(alpha-D-Man-(1-&gt;3)-[alpha-D-Man-(1-&gt;3)-[alpha-D-Man-(1-&gt;6)]-alpha-D-Man-(1-&gt;6)]-beta-D-Man-(1-&gt;4)-beta-D-GlcNAc-(1-&gt;4)-beta-D-GlcNAc)-L-asparaginyl-[protein] (N-glucan mannose isomer 5A1,2) + 4 beta-D-mannose. The enzyme catalyses N(4)-(alpha-D-Man-(1-&gt;2)-alpha-D-Man-(1-&gt;2)-alpha-D-Man-(1-&gt;3)-[alpha-D-Man-(1-&gt;3)-[alpha-D-Man-(1-&gt;2)-alpha-D-Man-(1-&gt;6)]-alpha-D-Man-(1-&gt;6)]-beta-D-Man-(1-&gt;4)-beta-D-GlcNAc-(1-&gt;4)-beta-D-GlcNAc)-L-asparaginyl-[protein] (N-glucan mannose isomer 8A1,2,3B1,3) + 3 H2O = N(4)-(alpha-D-Man-(1-&gt;3)-[alpha-D-Man-(1-&gt;3)-[alpha-D-Man-(1-&gt;6)]-alpha-D-Man-(1-&gt;6)]-beta-D-Man-(1-&gt;4)-beta-D-GlcNAc-(1-&gt;4)-beta-D-GlcNAc)-L-asparaginyl-[protein] (N-glucan mannose isomer 5A1,2) + 3 beta-D-mannose. It participates in protein modification; protein glycosylation. With respect to regulation, inhibited by both 1-deoxymannojirimycin (dMNJ) and kifunensine. Its function is as follows. Involved in glycoprotein quality control targeting of misfolded glycoproteins for degradation. It primarily trims a single alpha-1,2-linked mannose residue from Man(9)GlcNAc(2) to produce Man(8)GlcNAc(2), but at high enzyme concentrations, as found in the ER quality control compartment (ERQC), it further trims the carbohydrates to Man(5-6)GlcNAc(2). This chain is Endoplasmic reticulum mannosyl-oligosaccharide 1,2-alpha-mannosidase (MAN1B1), found in Homo sapiens (Human).